The chain runs to 299 residues: Oxygen-dependent coproporphyrinogen-III oxidase (299 aa).

A substrate-binding site is contributed by serine 92. 2 residues coordinate a divalent metal cation: histidine 96 and histidine 106. Residue histidine 106 is the Proton donor of the active site. Residue 108-110 (NVR) coordinates substrate. 2 residues coordinate a divalent metal cation: histidine 145 and histidine 175. The interval 239 to 274 (YVEFNLVYDRGTLFGLQSGGRAESILMSLPPQVRWE) is important for dimerization. Substrate is bound at residue 257–259 (GGR).

This sequence belongs to the aerobic coproporphyrinogen-III oxidase family. Homodimer. A divalent metal cation serves as cofactor.

It localises to the cytoplasm. The enzyme catalyses coproporphyrinogen III + O2 + 2 H(+) = protoporphyrinogen IX + 2 CO2 + 2 H2O. The protein operates within porphyrin-containing compound metabolism; protoporphyrin-IX biosynthesis; protoporphyrinogen-IX from coproporphyrinogen-III (O2 route): step 1/1. Functionally, involved in the heme biosynthesis. Catalyzes the aerobic oxidative decarboxylation of propionate groups of rings A and B of coproporphyrinogen-III to yield the vinyl groups in protoporphyrinogen-IX. The protein is Oxygen-dependent coproporphyrinogen-III oxidase of Xanthomonas campestris pv. campestris (strain B100).